The sequence spans 427 residues: Serine--tRNA ligase (427 aa).

L-serine is bound at residue 232–234 (TAE). Residue 263-265 (RSE) participates in ATP binding. Glu-286 is a binding site for L-serine. Residue 350 to 353 (EISS) participates in ATP binding. Ser-385 serves as a coordination point for L-serine.

The protein belongs to the class-II aminoacyl-tRNA synthetase family. Type-1 seryl-tRNA synthetase subfamily. As to quaternary structure, homodimer. The tRNA molecule binds across the dimer.

It is found in the cytoplasm. The catalysed reaction is tRNA(Ser) + L-serine + ATP = L-seryl-tRNA(Ser) + AMP + diphosphate + H(+). The enzyme catalyses tRNA(Sec) + L-serine + ATP = L-seryl-tRNA(Sec) + AMP + diphosphate + H(+). It functions in the pathway aminoacyl-tRNA biosynthesis; selenocysteinyl-tRNA(Sec) biosynthesis; L-seryl-tRNA(Sec) from L-serine and tRNA(Sec): step 1/1. Functionally, catalyzes the attachment of serine to tRNA(Ser). Is also able to aminoacylate tRNA(Sec) with serine, to form the misacylated tRNA L-seryl-tRNA(Sec), which will be further converted into selenocysteinyl-tRNA(Sec). In Lacticaseibacillus casei (strain BL23) (Lactobacillus casei), this protein is Serine--tRNA ligase.